A 337-amino-acid chain; its full sequence is MPRSFLVKSKKAHTYHQHRFVEDDLPIFTWDPITSAFTAAGDRDKTPEDGKKQDLEWVVPKQEKDSFQPKEESVPVQYLSRMLPGPSAQDMSISGLQVKDCTNPTSMPTFYKTGFSWDAFQLPYSYRQMSSTMQSALLEHPVSLYGSHLLPSAEPPLDYSMRYSSDMETYHCVKCNKVFSTPHGLEVHVRRSHSGTRPFACEVCGKTFGHAVSLEQHTNIHSQERSFECKMCGKTFKRSSTLSTHLLIHSDTRPYPCQYCGKRFHQKSDMKKHTYIHTGEKPHKCQVCGKAFSQSSNLITHSRKHTGFKPFSCELCAKGFQRKVDLRRHRETQHSLK.

Residues 1 to 20 (MPRSFLVKSKKAHTYHQHRF) are mediates repression of transcription. Residues 1–20 (MPRSFLVKSKKAHTYHQHRF) form an SNAG domain region. 6 consecutive C2H2-type zinc fingers follow at residues 170 to 193 (YHCV…RRSH), 199 to 221 (FACE…TNIH), 227 to 249 (FECK…LLIH), 255 to 277 (YPCQ…TYIH), 283 to 305 (HKCQ…SRKH), and 311 to 334 (FSCE…ETQH).

In terms of tissue distribution, expressed in erythroid cells of primitive and definitive lineage and bone marrow cells.

The protein localises to the nucleus. Essential transcriptional regulator necessary for development and differentiation of erythroid and megakaryocytic lineages. Alters histone methylation by recruiting histone methyltransferase to target genes promoters. Plays a role in heterochromatin formation. The polypeptide is Zinc finger protein Gfi-1b (GFI1B) (Gallus gallus (Chicken)).